The chain runs to 259 residues: Caffeoyl-CoA O-methyltransferase 1 (259 aa).

Residues 1-14 (MATTTTEATKTSST) are compositionally biased toward low complexity. The interval 1-29 (MATTTTEATKTSSTNGEDQKQSQNLRHQE) is disordered. N-acetylalanine is present on A2. K33 is a substrate binding site. Residues T75, E97, 99 to 100 (GV), S105, D123, and A152 contribute to the S-adenosyl-L-methionine site. D175 provides a ligand contact to substrate. D175 contributes to the a divalent metal cation binding site. D177 provides a ligand contact to S-adenosyl-L-methionine. The a divalent metal cation site is built by D201 and N202. N206 contributes to the substrate binding site.

Belongs to the class I-like SAM-binding methyltransferase superfamily. Cation-dependent O-methyltransferase family. CCoAMT subfamily. A divalent metal cation serves as cofactor. As to expression, expressed in stems and roots. Detected in leaves, siliques, flower buds, flowers. Expressed in the tapetum, but not in the endothecium. Detected in the vascular system of leaves and all flower organs, including stigma, stamens, petals and sepals.

The enzyme catalyses (E)-caffeoyl-CoA + S-adenosyl-L-methionine = (E)-feruloyl-CoA + S-adenosyl-L-homocysteine + H(+). The protein operates within aromatic compound metabolism; phenylpropanoid biosynthesis. Methylates caffeoyl-CoA to feruloyl-CoA. Has a very low activity with caffeic acid and esculetin. Involved in scopoletin biosynthesis in roots. The sequence is that of Caffeoyl-CoA O-methyltransferase 1 (CCOAOMT1) from Arabidopsis thaliana (Mouse-ear cress).